We begin with the raw amino-acid sequence, 22 residues long: Mu-conotoxin KIIIB (22 aa).

The propeptide occupies 1–2; the sequence is KR. 7 disulfide bridges follow: Cys5–Cys13, Cys5–Cys19, Cys5–Cys20, Cys6–Cys13, Cys6–Cys19, Cys8–Cys19, and Cys8–Cys20. Pharmacophore key residues regions lie at residues 14–16 and 18–19; these read RDH and RC. Cys20 is modified (cysteine amide).

The protein belongs to the conotoxin M superfamily. In terms of assembly, monomer. Post-translationally, toxins with three different disulfide connectivities have been synthesized. The conotoxin mu-KIIIA-P1 shows the connectivity C1-C5, C2-C4, and C3-C6, whereas mu-KIIIA-P2 shows the connectivity C1-C6, C2-C4, and C3-C5. The conotoxin mu-KIIIA-N has the 'native' fold of the mu-conotoxin family (C1-C4, C2-C5, and C3-C6). Mu-KIIIA-P1 and mu-KIIIA-P2 are obtained by both thermodynamic oxidative folding and regioselective synthesis. Mu-KIIIA-P1 is the major oxidative folding product. Mu-KIIIA-N is only obtained by regioselective synthesis. Expressed by the venom duct.

It is found in the secreted. Mu-conotoxin KIIIA-P1: mu-conotoxins block voltage-gated sodium channels (Nav). This toxin potently blocks Nav1.2/SCN2A (IC(50)5-124 nM), Nav1.4/SCN4A (IC(50)=20-90 nM), and Nav1.7/SCN9A (IC(50)=290-413 nM). It moderately blocks Nav1.1/SCN1A, and mNav1.6/SCN8A. It also shows a very low activity on Nav1.3/SCN3A. This toxin binds a microsite within the pore different from the tetrodotoxin binding site 1 (tested on Nav1.2). The block is partial, with a residual current that can be completely blocked by TTX. The toxin probably docks at a more superficial site in the outer vestibule of the channel than does TTX. On rNav1.2/SCN2A, it produces a block that is only partially reversible. The block of Nav1.7 is modified when beta-subunits are coexpressed with the alpha subunit. Hence, blocks of channels containing beta-1 and beta-3 subunits are more potent (compared to channels without beta subunits), whereas blocks of channels containing beta-2 and beta-4 subunits are less potent (compared to channels without beta subunits). Its function is as follows. Mu-conotoxin KIIIA-P2: This toxin potently blocks Nav1.2/SCN2A (Kd=230 nM, IC(50)=1.37 uM) and Nav1.4/SCN4A (Kd=830 nM, IC(50)=2 uM). It also moderately blocks Nav1.7/SCN9A (Kd=1.57 uM, IC(50)=5.4 uM). In addition, this toxin may also inhibit other sodium channels, as does Mu-conotoxin KIIIA-P1. In terms of biological role, mu-conotoxin KIIIA-N: This toxin moderately blocks Nav1.2/SCN2A (IC(50)=875 nM), Nav1.4/SCN4A (IC(50)=472 nM), and Nav1.7/SCN9A (IC(50)=887 nM). Functionally, mu-conotoxin KIIIB-P1: This toxin potently blocks Nav1.2/SCN2A (Kd=470 nM). In addition, this toxin may also inhibit other sodium channels, as does Mu-conotoxin KIIIA-P1. Mu-conotoxin KIIIB-P2: This toxin potently blocks Nav1.2/SCN2A (Kd=26 nM). In addition, this toxin may also inhibit other sodium channels, as does Mu-conotoxin KIIIA-P1. The sequence is that of Mu-conotoxin KIIIB from Conus kinoshitai (Kinoshita's cone).